The chain runs to 331 residues: Activator of 90 kDa heat shock protein ATPase homolog 2 (331 aa).

This sequence belongs to the AHA1 family.

Co-chaperone that stimulates HSP90 ATPase activity. This chain is Activator of 90 kDa heat shock protein ATPase homolog 2 (Ahsa2), found in Mus musculus (Mouse).